The following is a 263-amino-acid chain: Aminoglycoside (3'') (9) adenylyltransferase (263 aa).

It catalyses the reaction streptomycin + ATP = 3''-O-adenylylstreptomycin + diphosphate. The enzyme catalyses spectinomycin + ATP = 9-O-adenylylspectinomycin + diphosphate. Functionally, mediates bacterial resistance to the antibiotics streptomycin and spectinomycin. This chain is Aminoglycoside (3'') (9) adenylyltransferase, found in Escherichia coli.